Reading from the N-terminus, the 123-residue chain is Ribosome-binding factor A (123 aa).

It belongs to the RbfA family. As to quaternary structure, monomer. Binds 30S ribosomal subunits, but not 50S ribosomal subunits or 70S ribosomes.

It localises to the cytoplasm. Functionally, one of several proteins that assist in the late maturation steps of the functional core of the 30S ribosomal subunit. Associates with free 30S ribosomal subunits (but not with 30S subunits that are part of 70S ribosomes or polysomes). Required for efficient processing of 16S rRNA. May interact with the 5'-terminal helix region of 16S rRNA. In Rickettsia bellii (strain OSU 85-389), this protein is Ribosome-binding factor A.